Reading from the N-terminus, the 955-residue chain is Mediator of RNA polymerase II transcription subunit 16 (955 aa).

Belongs to the Mediator complex subunit 16 family. In terms of assembly, component of the Mediator complex.

It is found in the nucleus. Functionally, component of the Mediator complex, a coactivator involved in the regulated transcription of nearly all RNA polymerase II-dependent genes. Mediator functions as a bridge to convey information from gene-specific regulatory proteins to the basal RNA polymerase II transcription machinery. Mediator is recruited to promoters by direct interactions with regulatory proteins and serves as a scaffold for the assembly of a functional preinitiation complex with RNA polymerase II and the general transcription factors. In Neosartorya fischeri (strain ATCC 1020 / DSM 3700 / CBS 544.65 / FGSC A1164 / JCM 1740 / NRRL 181 / WB 181) (Aspergillus fischerianus), this protein is Mediator of RNA polymerase II transcription subunit 16 (sin4).